Here is a 162-residue protein sequence, read N- to C-terminus: MDFRIGQGYDVHQLVPGRPLIIGGVTIPYERGLLGHSDADVLLHAITDALFGAAALGDIGRHFSDTDPRFKGADSRALLRECASRVAQAGFAIRNVDSTIIAQAPKLAPHIDAMRANIAADLDLPLDRVNVKAKTNEKLGYLGRGEGIEAQAAALVVREAAA.

Positions 10 and 12 each coordinate a divalent metal cation. 4-CDP-2-C-methyl-D-erythritol 2-phosphate contacts are provided by residues 10-12 and 36-37; these read DVH and HS. H44 contributes to the a divalent metal cation binding site. Residues 58-60, 63-67, and R144 contribute to the 4-CDP-2-C-methyl-D-erythritol 2-phosphate site; these read DIG and FSDTD.

This sequence belongs to the IspF family. As to quaternary structure, homotrimer. Requires a divalent metal cation as cofactor.

The enzyme catalyses 4-CDP-2-C-methyl-D-erythritol 2-phosphate = 2-C-methyl-D-erythritol 2,4-cyclic diphosphate + CMP. It participates in isoprenoid biosynthesis; isopentenyl diphosphate biosynthesis via DXP pathway; isopentenyl diphosphate from 1-deoxy-D-xylulose 5-phosphate: step 4/6. Functionally, involved in the biosynthesis of isopentenyl diphosphate (IPP) and dimethylallyl diphosphate (DMAPP), two major building blocks of isoprenoid compounds. Catalyzes the conversion of 4-diphosphocytidyl-2-C-methyl-D-erythritol 2-phosphate (CDP-ME2P) to 2-C-methyl-D-erythritol 2,4-cyclodiphosphate (ME-CPP) with a corresponding release of cytidine 5-monophosphate (CMP). This chain is 2-C-methyl-D-erythritol 2,4-cyclodiphosphate synthase, found in Burkholderia mallei (strain NCTC 10247).